The following is a 918-amino-acid chain: Glutamate receptor ionotropic, kainate 1 (918 aa).

The signal sequence occupies residues 1-30 (MEHGTLLAQPGLWTRDTSWALLYFLCYILP). Topologically, residues 31–576 (QTAPQVLRIG…VFSFLNPLSP (546 aa)) are extracellular. N-linked (GlcNAc...) asparagine glycans are attached at residues Asn-68, Asn-74, Asn-276, Asn-379, Asn-428, Asn-439, and Asn-446. Residues Pro-531, Thr-533, and Arg-538 each coordinate L-glutamate. Residue Asn-561 is glycosylated (N-linked (GlcNAc...) asparagine). Residues 577-597 (DIWMYVLLACLGVSCVLFVIA) form a helical membrane-spanning segment. At 598–653 (RFTPYEWYNPHPCNPDSDVVENNFTLLNSFWFGVGALMQQGSELMPKALSTRIVGG) the chain is on the cytoplasmic side. A helical transmembrane segment spans residues 654 to 674 (IWWFFTLIIISSYTANLAAFL). Residues 675-834 (TVERMESPID…KEASALGVEN (160 aa)) are Extracellular-facing. Residues Ser-704 and Thr-705 each coordinate L-glutamate. Position 725 is a phosphoserine; by PKC (Ser-725). Glu-753 contacts L-glutamate. Thr-761 carries the phosphothreonine; by PKC modification. The cysteines at positions 765 and 819 are disulfide-linked. The N-linked (GlcNAc...) asparagine glycan is linked to Asn-766. A helical transmembrane segment spans residues 835–855 (IGGIFIVLAAGLVLSVFVAIG). Residues 856–918 (EFIYKSRKNN…IRKQSSVHTV (63 aa)) are Cytoplasmic-facing.

This sequence belongs to the glutamate-gated ion channel (TC 1.A.10.1) family. GRIK1 subfamily. As to quaternary structure, homotetramer or heterotetramer of pore-forming glutamate receptor subunits. Tetramers may be formed by the dimerization of dimers. Can form functional heteromeric receptors with GRIK5. Can form functional heteromeric receptors with GRIK4. Interacts with KLHL17.

The protein localises to the cell membrane. The protein resides in the postsynaptic cell membrane. The enzyme catalyses Ca(2+)(in) = Ca(2+)(out). Ionotropic glutamate receptor that functions as a cation-permeable ligand-gated ion channel, gated by L-glutamate and the glutamatergic agonist kainic acid. L-glutamate acts as an excitatory neurotransmitter at many synapses in the central nervous system. Binding of the excitatory neurotransmitter L-glutamate induces a conformation change, leading to the opening of the cation channel, and thereby converts the chemical signal to an electrical impulse. The receptor then desensitizes rapidly and enters a transient inactive state, characterized by the presence of bound agonist. Its function is as follows. Ionotropic glutamate receptor that functions as a cation-permeable ligand-gated ion channel, gated by L-glutamate and the glutamatergic agonist kainic acid. The polypeptide is Glutamate receptor ionotropic, kainate 1 (GRIK1) (Homo sapiens (Human)).